We begin with the raw amino-acid sequence, 351 residues long: Photosystem II D2 protein (351 aa).

A helical membrane pass occupies residues 39-59; that stretch reads TAYLAAGGWFTGTTFVTSWYT. Residue H116 participates in chlorophyll a binding. The helical transmembrane segment at 123 to 139 threads the bilayer; that stretch reads GFCLRQFEIARLVGIRP. Positions 128 and 141 each coordinate pheophytin a. The helical transmembrane segment at 151–164 threads the bilayer; that stretch reads VFVSVFLLYPLGQA. H196 serves as a coordination point for chlorophyll a. Residues 206 to 226 traverse the membrane as a helical segment; that stretch reads GALLCAIHGATVENTLFEDGD. 2 residues coordinate a plastoquinone: H213 and F260. H213 contacts Fe cation. H267 is a Fe cation binding site. The chain crosses the membrane as a helical span at residues 277–293; sequence GLWTSSIGIVGLALNLR.

This sequence belongs to the reaction center PufL/M/PsbA/D family. In terms of assembly, PSII is composed of 1 copy each of membrane proteins PsbA, PsbB, PsbC, PsbD, PsbE, PsbF, PsbH, PsbI, PsbJ, PsbK, PsbL, PsbM, PsbT, PsbX, PsbY, PsbZ, Psb30/Ycf12, at least 3 peripheral proteins of the oxygen-evolving complex and a large number of cofactors. It forms dimeric complexes. The D1/D2 heterodimer binds P680, chlorophylls that are the primary electron donor of PSII, and subsequent electron acceptors. It shares a non-heme iron and each subunit binds pheophytin, quinone, additional chlorophylls, carotenoids and lipids. There is also a Cl(-1) ion associated with D1 and D2, which is required for oxygen evolution. The PSII complex binds additional chlorophylls, carotenoids and specific lipids. serves as cofactor.

It localises to the plastid. Its subcellular location is the chloroplast thylakoid membrane. The enzyme catalyses 2 a plastoquinone + 4 hnu + 2 H2O = 2 a plastoquinol + O2. Photosystem II (PSII) is a light-driven water:plastoquinone oxidoreductase that uses light energy to abstract electrons from H(2)O, generating O(2) and a proton gradient subsequently used for ATP formation. It consists of a core antenna complex that captures photons, and an electron transfer chain that converts photonic excitation into a charge separation. The D1/D2 (PsbA/PsbD) reaction center heterodimer binds P680, the primary electron donor of PSII as well as several subsequent electron acceptors. D2 is needed for assembly of a stable PSII complex. The protein is Photosystem II D2 protein of Thalassiosira pseudonana (Marine diatom).